The sequence spans 196 residues: Thymidine kinase (196 aa).

ATP is bound by residues 9-16 (SAMNAGKS) and 88-91 (DEAQ). Glu89 acts as the Proton acceptor in catalysis. Cys146, Cys148, Cys183, and His186 together coordinate Zn(2+).

It belongs to the thymidine kinase family. As to quaternary structure, homotetramer.

The protein localises to the cytoplasm. It catalyses the reaction thymidine + ATP = dTMP + ADP + H(+). The sequence is that of Thymidine kinase from Coxiella burnetii (strain RSA 493 / Nine Mile phase I).